The chain runs to 436 residues: Methylenetetrahydrofolate--tRNA-(uracil-5-)-methyltransferase TrmFO (436 aa).

Position 7–12 (7–12 (GAGLAG)) interacts with FAD.

The protein belongs to the MnmG family. TrmFO subfamily. It depends on FAD as a cofactor.

It is found in the cytoplasm. The catalysed reaction is uridine(54) in tRNA + (6R)-5,10-methylene-5,6,7,8-tetrahydrofolate + NADH + H(+) = 5-methyluridine(54) in tRNA + (6S)-5,6,7,8-tetrahydrofolate + NAD(+). It catalyses the reaction uridine(54) in tRNA + (6R)-5,10-methylene-5,6,7,8-tetrahydrofolate + NADPH + H(+) = 5-methyluridine(54) in tRNA + (6S)-5,6,7,8-tetrahydrofolate + NADP(+). Functionally, catalyzes the folate-dependent formation of 5-methyl-uridine at position 54 (M-5-U54) in all tRNAs. The sequence is that of Methylenetetrahydrofolate--tRNA-(uracil-5-)-methyltransferase TrmFO from Caldicellulosiruptor bescii (strain ATCC BAA-1888 / DSM 6725 / KCTC 15123 / Z-1320) (Anaerocellum thermophilum).